Reading from the N-terminus, the 425-residue chain is Glutamyl-tRNA reductase (425 aa).

Substrate-binding positions include threonine 49–arginine 52, serine 107, glutamate 112–glutamine 114, and glutamine 118. Cysteine 50 (nucleophile) is an active-site residue. Glycine 187–isoleucine 192 contributes to the NADP(+) binding site.

It belongs to the glutamyl-tRNA reductase family. As to quaternary structure, homodimer.

It carries out the reaction (S)-4-amino-5-oxopentanoate + tRNA(Glu) + NADP(+) = L-glutamyl-tRNA(Glu) + NADPH + H(+). The protein operates within porphyrin-containing compound metabolism; protoporphyrin-IX biosynthesis; 5-aminolevulinate from L-glutamyl-tRNA(Glu): step 1/2. Catalyzes the NADPH-dependent reduction of glutamyl-tRNA(Glu) to glutamate 1-semialdehyde (GSA). The protein is Glutamyl-tRNA reductase of Pseudomonas entomophila (strain L48).